Consider the following 424-residue polypeptide: Glutamate-1-semialdehyde 2,1-aminomutase (424 aa).

Lys-264 bears the N6-(pyridoxal phosphate)lysine mark.

This sequence belongs to the class-III pyridoxal-phosphate-dependent aminotransferase family. HemL subfamily. As to quaternary structure, homodimer. It depends on pyridoxal 5'-phosphate as a cofactor.

The protein localises to the cytoplasm. It carries out the reaction (S)-4-amino-5-oxopentanoate = 5-aminolevulinate. Its pathway is porphyrin-containing compound metabolism; protoporphyrin-IX biosynthesis; 5-aminolevulinate from L-glutamyl-tRNA(Glu): step 2/2. In Aquifex aeolicus (strain VF5), this protein is Glutamate-1-semialdehyde 2,1-aminomutase (hemL).